The primary structure comprises 69 residues: uncharacterized protein (69 aa).

A signal peptide spans 1–21; that stretch reads MNTKFILILLVLIISTIFVNS.

It localises to the secreted. This is an uncharacterized protein from Dictyostelium discoideum (Social amoeba).